We begin with the raw amino-acid sequence, 43 residues long: MEPAIVLIISVGAALVAVTGYGIYTAFGPPSRELSDPFEDHED.

A helical membrane pass occupies residues 4–24 (AIVLIISVGAALVAVTGYGIY).

It belongs to the PsbN family.

Its subcellular location is the cellular thylakoid membrane. Its function is as follows. May play a role in photosystem I and II biogenesis. This chain is Protein PsbN, found in Trichormus variabilis (strain ATCC 29413 / PCC 7937) (Anabaena variabilis).